The primary structure comprises 333 residues: NADH-quinone oxidoreductase subunit H (333 aa).

Helical transmembrane passes span phenylalanine 15 to tyrosine 35, phenylalanine 88 to phenylalanine 108, isoleucine 117 to threonine 137, isoleucine 159 to leucine 179, valine 191 to glutamate 211, phenylalanine 241 to phenylalanine 261, phenylalanine 273 to tryptophan 293, and valine 313 to phenylalanine 333.

This sequence belongs to the complex I subunit 1 family. As to quaternary structure, NDH-1 is composed of 14 different subunits. Subunits NuoA, H, J, K, L, M, N constitute the membrane sector of the complex.

It is found in the cell membrane. It catalyses the reaction a quinone + NADH + 5 H(+)(in) = a quinol + NAD(+) + 4 H(+)(out). In terms of biological role, NDH-1 shuttles electrons from NADH, via FMN and iron-sulfur (Fe-S) centers, to quinones in the respiratory chain. The immediate electron acceptor for the enzyme in this species is believed to be ubiquinone. Couples the redox reaction to proton translocation (for every two electrons transferred, four hydrogen ions are translocated across the cytoplasmic membrane), and thus conserves the redox energy in a proton gradient. This subunit may bind ubiquinone. This is NADH-quinone oxidoreductase subunit H from Bacillus cytotoxicus (strain DSM 22905 / CIP 110041 / 391-98 / NVH 391-98).